A 443-amino-acid chain; its full sequence is MDFDLNGGNKRVFNRLGGGGGSTRPMAPTDTRQKVCFHWRAGRCNRSPCPYLHRELPGPGPGQGQGPGYTNKRVAEESGFAGPSHRRGPGFNGNSSSSWGRFGGNRTVTKTEKVCNFWVDGNCTYGDKCRYLHCWSKGESFALLTQLDGHEKLVSGIALPSGSDKLYTGSKDETLRVWDCASGQCTGVLKLGGEIGCVLSEGPWLLVGMPNLVKAWNIETNADQSLSGPVGQVYSLVVGTDLLFAGTQDGSILAWRYNAATNCFEPSASLTGHTLAVVTLYVGANRLYSGSMDKTIKVWSLDNLQCIQTLTDHSSVVMSLICWDQFLLSCSLDNTVKIWAAIEGGNLEVTYTHKEEHGVLALCGVHDAEAKPVLLCACNDNTLRLYDLPSLGLFIRFTERGKIFAKQEIRAIQIGPGGIFFTGDGTGQVKVWKWCTEPTAALP.

2 disordered regions span residues 1–29 and 56–99; these read MDFD…MAPT and LPGP…SSSW. 2 C3H1-type zinc fingers span residues 30–56 and 109–136; these read DTRQ…HREL and TKTE…HCWS. WD repeat units lie at residues 149–190, 228–265, 272–311, 313–349, 354–396, and 404–442; these read GHEK…GVLK, GPVG…NCFE, GHTL…QTLT, HSSV…NLEV, KEEH…LFIR, and FAKQ…TAAL.

The protein is Zinc finger CCCH domain-containing protein 63 (ZFWD2) of Arabidopsis thaliana (Mouse-ear cress).